The chain runs to 516 residues: Exodeoxyribonuclease 7 large subunit (516 aa).

Belongs to the XseA family. In terms of assembly, heterooligomer composed of large and small subunits.

The protein resides in the cytoplasm. The catalysed reaction is Exonucleolytic cleavage in either 5'- to 3'- or 3'- to 5'-direction to yield nucleoside 5'-phosphates.. Bidirectionally degrades single-stranded DNA into large acid-insoluble oligonucleotides, which are then degraded further into small acid-soluble oligonucleotides. The sequence is that of Exodeoxyribonuclease 7 large subunit from Chlamydia trachomatis serovar L2 (strain ATCC VR-902B / DSM 19102 / 434/Bu).